A 552-amino-acid polypeptide reads, in one-letter code: CTP synthase (552 aa).

Residues 1-270 form an amidoligase domain region; it reads MTKFVFVTGG…DGLICDKLRL (270 aa). Ser13 is a CTP binding site. Ser13 lines the UTP pocket. Residues 14 to 19 and Asp71 contribute to the ATP site; that span reads SLGKGI. Mg(2+)-binding residues include Asp71 and Glu144. CTP-binding positions include 151–153, 191–196, and Lys227; these read DIE and KTKPTQ. UTP is bound by residues 191–196 and Lys227; that span reads KTKPTQ. Residues 295–548 form the Glutamine amidotransferase type-1 domain; it reads QIAMVGKYVE…IKAAVEHQKP (254 aa). Gly357 contacts L-glutamine. Catalysis depends on Cys384, which acts as the Nucleophile; for glutamine hydrolysis. Residues 385-388, Glu408, and Arg474 contribute to the L-glutamine site; that span reads LGMQ. Active-site residues include His521 and Glu523.

The protein belongs to the CTP synthase family. As to quaternary structure, homotetramer.

The enzyme catalyses UTP + L-glutamine + ATP + H2O = CTP + L-glutamate + ADP + phosphate + 2 H(+). The catalysed reaction is L-glutamine + H2O = L-glutamate + NH4(+). It catalyses the reaction UTP + NH4(+) + ATP = CTP + ADP + phosphate + 2 H(+). It participates in pyrimidine metabolism; CTP biosynthesis via de novo pathway; CTP from UDP: step 2/2. With respect to regulation, allosterically activated by GTP, when glutamine is the substrate; GTP has no effect on the reaction when ammonia is the substrate. The allosteric effector GTP functions by stabilizing the protein conformation that binds the tetrahedral intermediate(s) formed during glutamine hydrolysis. Inhibited by the product CTP, via allosteric rather than competitive inhibition. Functionally, catalyzes the ATP-dependent amination of UTP to CTP with either L-glutamine or ammonia as the source of nitrogen. Regulates intracellular CTP levels through interactions with the four ribonucleotide triphosphates. The protein is CTP synthase of Acidovorax ebreus (strain TPSY) (Diaphorobacter sp. (strain TPSY)).